The following is a 164-amino-acid chain: Ion-translocating oxidoreductase complex subunit G (164 aa).

FMN phosphoryl threonine is present on Thr125.

This sequence belongs to the RnfG family. The complex is composed of six subunits: RnfA, RnfB, RnfC, RnfD, RnfE and RnfG. The cofactor is FMN.

Part of a membrane-bound complex that couples electron transfer with translocation of ions across the membrane. This Buchnera aphidicola subsp. Acyrthosiphon pisum (strain APS) (Acyrthosiphon pisum symbiotic bacterium) protein is Ion-translocating oxidoreductase complex subunit G.